The primary structure comprises 470 residues: Nuclear receptor ROR-beta (470 aa).

A DNA-binding region (nuclear receptor) is located at residues Val18–Phe93. 2 NR C4-type zinc fingers span residues Cys21–Cys41 and Cys57–Cys81. The segment covering Leu104–Glu117 has biased composition (basic and acidic residues). Residues Leu104–Glu127 form a disordered region. An NR LBD domain is found at Glu222–Leu460. The AF-2 motif lies at Leu456 to Phe461.

It belongs to the nuclear hormone receptor family. NR1 subfamily. Monomer. Interacts with CRX. In terms of tissue distribution, expressed in inner and outer neuroblastic layer as well as in the ganglion cell layer of the developing retina. Expressed in bone marrow osteoprogenitor cells.

It is found in the nucleus. The protein localises to the nucleoplasm. Its function is as follows. Nuclear receptor that binds DNA as a monomer to ROR response elements (RORE) containing a single core motif half-site 5'-AGGTCA-3' preceded by a short A-T-rich sequence. Considered to have intrinsic transcriptional activity, have some natural ligands such as all-trans retinoic acid (ATRA) and other retinoids which act as inverse agonists repressing the transcriptional activity. Required for normal postnatal development of rod and cone photoreceptor cells. Modulates rod photoreceptors differentiation at least by inducing the transcription factor NRL-mediated pathway. In cone photoreceptor cells, regulates transcription of OPN1SW. Involved in the regulation of the period length and stability of the circadian rhythm. May control cytoarchitectural patterning of neocortical neurons during development. May act in a dose-dependent manner to regulate barrel formation upon innervation of layer IV neurons by thalamocortical axons. May play a role in the suppression of osteoblastic differentiation through the inhibition of RUNX2 transcriptional activity. Isoform 1 is critical for hindlimb motor control and for the differentiation of amacrine and horizontal cells in the retina. Regulates the expression of PTF1A synergistically with FOXN4. The polypeptide is Nuclear receptor ROR-beta (Rorb) (Mus musculus (Mouse)).